Consider the following 235-residue polypeptide: 1-(5-phosphoribosyl)-5-[(5-phosphoribosylamino)methylideneamino] imidazole-4-carboxamide isomerase (235 aa).

D8 acts as the Proton acceptor in catalysis. D127 serves as the catalytic Proton donor.

This sequence belongs to the HisA/HisF family.

The protein resides in the cytoplasm. It carries out the reaction 1-(5-phospho-beta-D-ribosyl)-5-[(5-phospho-beta-D-ribosylamino)methylideneamino]imidazole-4-carboxamide = 5-[(5-phospho-1-deoxy-D-ribulos-1-ylimino)methylamino]-1-(5-phospho-beta-D-ribosyl)imidazole-4-carboxamide. The protein operates within amino-acid biosynthesis; L-histidine biosynthesis; L-histidine from 5-phospho-alpha-D-ribose 1-diphosphate: step 4/9. This Aliarcobacter butzleri (strain RM4018) (Arcobacter butzleri) protein is 1-(5-phosphoribosyl)-5-[(5-phosphoribosylamino)methylideneamino] imidazole-4-carboxamide isomerase.